We begin with the raw amino-acid sequence, 360 residues long: UDP-N-acetylglucosamine--N-acetylmuramyl-(pentapeptide) pyrophosphoryl-undecaprenol N-acetylglucosamine transferase (360 aa).

UDP-N-acetyl-alpha-D-glucosamine is bound by residues Ser198 and Gln289.

It belongs to the glycosyltransferase 28 family. MurG subfamily.

It is found in the cell membrane. It carries out the reaction Mur2Ac(oyl-L-Ala-gamma-D-Glu-L-Lys-D-Ala-D-Ala)-di-trans,octa-cis-undecaprenyl diphosphate + UDP-N-acetyl-alpha-D-glucosamine = beta-D-GlcNAc-(1-&gt;4)-Mur2Ac(oyl-L-Ala-gamma-D-Glu-L-Lys-D-Ala-D-Ala)-di-trans,octa-cis-undecaprenyl diphosphate + UDP + H(+). The protein operates within cell wall biogenesis; peptidoglycan biosynthesis. In terms of biological role, cell wall formation. Catalyzes the transfer of a GlcNAc subunit on undecaprenyl-pyrophosphoryl-MurNAc-pentapeptide (lipid intermediate I) to form undecaprenyl-pyrophosphoryl-MurNAc-(pentapeptide)GlcNAc (lipid intermediate II). The protein is UDP-N-acetylglucosamine--N-acetylmuramyl-(pentapeptide) pyrophosphoryl-undecaprenol N-acetylglucosamine transferase of Streptococcus pyogenes serotype M5 (strain Manfredo).